The sequence spans 139 residues: Aspartate 1-decarboxylase (139 aa).

The active-site Schiff-base intermediate with substrate; via pyruvic acid is the serine 25. Serine 25 is subject to Pyruvic acid (Ser). Threonine 57 contacts substrate. The Proton donor role is filled by tyrosine 58. Position 73–75 (73–75 (GAA)) interacts with substrate.

It belongs to the PanD family. Heterooctamer of four alpha and four beta subunits. Pyruvate is required as a cofactor. Post-translationally, is synthesized initially as an inactive proenzyme, which is activated by self-cleavage at a specific serine bond to produce a beta-subunit with a hydroxyl group at its C-terminus and an alpha-subunit with a pyruvoyl group at its N-terminus.

The protein localises to the cytoplasm. It catalyses the reaction L-aspartate + H(+) = beta-alanine + CO2. It functions in the pathway cofactor biosynthesis; (R)-pantothenate biosynthesis; beta-alanine from L-aspartate: step 1/1. In terms of biological role, catalyzes the pyruvoyl-dependent decarboxylation of aspartate to produce beta-alanine. This is Aspartate 1-decarboxylase from Mycobacterium bovis (strain BCG / Tokyo 172 / ATCC 35737 / TMC 1019).